Consider the following 305-residue polypeptide: MIHCGICGKAKTADVQFICCHCINGSPAVLLRDKMNLLILRQEVEQLKTAVEDQLETGFAGEGQLGRQLQKLDIYNEKRRLIKLRQRLQLARNKVQLKRNKYNELLQIMSTNGYLEESTSATDSIDLEEQAAEESASLDTLSHILARNQKQLFAELCRWFRIRKSDEDDVFSYTIWGLPMVNLKNGSELDPSIMVSSMRYLQQYLQLAFRIWLFKAICDKPIENDRNIIENFTQLIYDTLDILRARKLVSKSVSIRDILIRYDLDGMIYHLSQNKYLSSLDDASNSYPPTMQNIKQLVMSMIPSI.

Residues 34-147 are a coiled coil; it reads KMNLLILRQE…LDTLSHILAR (114 aa).

It belongs to the ATG14 family. As to quaternary structure, component of the autophagy-specific VPS34 PI3-kinase complex I.

The protein localises to the preautophagosomal structure membrane. It is found in the vacuole membrane. In terms of biological role, required for cytoplasm to vacuole transport (Cvt) and autophagy as a part of the autophagy-specific VPS34 PI3-kinase complex I. This complex is essential to recruit the ATG8-phosphatidylinositol conjugate and the ATG12-ATG5 conjugate to the pre-autophagosomal structure. ATG14 mediates the specific binding of the VPS34 PI3-kinase complex I to the preautophagosomal structure (PAS). The sequence is that of Autophagy-related protein 14 from Kluyveromyces marxianus (strain DMKU3-1042 / BCC 29191 / NBRC 104275) (Yeast).